The following is a 562-amino-acid chain: Teichoic acid ribitol-phosphate polymerase TarL (562 aa).

The protein belongs to the CDP-glycerol glycerophosphotransferase family.

Its subcellular location is the cell membrane. The enzyme catalyses 4-O-[di(2R)-glycerylphospho]-N-acetyl-beta-D-mannosaminyl-(1-&gt;4)-N-acetyl-alpha-D-glucosaminyl di-trans,octa-cis-undecaprenyl diphosphate + n CDP-L-ribitol = 4-O-[(D-ribitylphospho)(n)-di{(2R)-glycerylphospho}]-N-acetyl-beta-D-mannosaminyl-(1-&gt;4)-N-acetyl-alpha-D-glucosaminyl di-trans,octa-cis-undecaprenyl diphosphate + n CMP + n H(+). Its pathway is cell wall biogenesis; poly(ribitol phosphate) teichoic acid biosynthesis. In terms of biological role, responsible for the polymerization of the main chain of the major teichoic acid by sequential transfer of ribitol phosphate units from CDP-ribitol to the second glycerol phosphate attached to the disaccharide linkage unit. Synthesizes polymers of more than 40 ribitol phosphate units in length. The polypeptide is Teichoic acid ribitol-phosphate polymerase TarL (tarL) (Staphylococcus aureus (strain NCTC 8325 / PS 47)).